A 2176-amino-acid polypeptide reads, in one-letter code: Methyl-CpG-binding domain-containing protein 9 (2176 aa).

Over residues 1–13 the composition is skewed to polar residues; sequence MEPTDSTNEQLGD. Disordered stretches follow at residues 1–20 and 28–85; these read MEPTDSTNEQLGDTKTAAVK and GIDL…RDAS. The PHD-type 1 zinc finger occupies 83 to 133; that stretch reads DASCGACGRPESIELVVVCDACERGFHMSCVNDGVEAAPSADWMCSDCRTG. Residues 86 to 131 form an RING-type 1; degenerate zinc finger; sequence CGACGRPESIELVVVCDACERGFHMSCVNDGVEAAPSADWMCSDCR. An MBD domain is found at 258–327; it reads RHFISERHGV…MDAEIRNENS (70 aa). In terms of domain architecture, FYR N-terminal spans 403-456; sequence GCPMQFEDFFVLSLGRIDIRQSYHNVNVIYPIGYKSCWHDKITGSLFTCEVSDG. The stretch at 491–511 forms a coiled coil; sequence EQNSDKLSNRRDSTQERDDDA. The 149-residue stretch at 550 to 698 folds into the FYR C-terminal domain; that stretch reads SSRVDFDKNL…ESCTNYRTLK (149 aa). 3 consecutive short sequence motifs (nuclear localization signal) follow at residues 914–921, 1124–1131, and 1256–1263; these read SRRGRKKD, KKRTYISV, and YRKLECLS. One copy of the Pumilio repeat lies at 1098-1137; sequence PTKKAVLSLLADIRGGDLVQRSIKGTKKRTYISVSDVIMK. Residues 1130–1245 enclose the Bromo domain; it reads SVSDVIMKKC…EKFKSLYEAE (116 aa). A coiled-coil region spans residues 1251 to 1273; sequence QKLKDYRKLECLSAEMKKEIKDI. Residues 1287–1337 form a PHD-type 2 zinc finger; it reads EGVCKVCGVDKDDDSVLLCDTCDAEYHTYCLNPPLIRIPDGNWYCPSCVIA. The RING-type 2; degenerate zinc-finger motif lies at 1290-1335; that stretch reads CKVCGVDKDDDSVLLCDTCDAEYHTYCLNPPLIRIPDGNWYCPSCV. Positions 1337 to 1344 match the Nuclear localization signal motif; sequence AKRMAQEA. Positions 1410–1437 form a coiled coil; that stretch reads QHLEQCAEAIIEMQQKLRSLSSEWKNAK. 2 disordered regions span residues 1472–1553 and 1565–1595; these read GCDP…NLPE and GRNHETHSPNSNAVELPTAHDASSQASQELQ. 3 stretches are compositionally biased toward polar residues: residues 1492–1513, 1523–1532, and 1585–1595; these read SSTAYLNKNQGKSPLETDTQPG, KISSPETISS, and DASSQASQELQ. The stretch at 1588–1628 forms a coiled coil; sequence SQASQELQACQQDLSATSNEIQNLQQSIRSIESQLLKQSIR. The Nuclear localization signal motif lies at 1761–1768; that stretch reads EKRYGPCI. The interval 2136 to 2176 is disordered; the sequence is IDETKPIISLPDQKSQPVSDSQERSSRVRRSGKKRKEPEGS.

Interacts with histone H4. Expressed in leaves, buds, flowers and stems.

Its subcellular location is the nucleus. The catalysed reaction is L-lysyl-[protein] + acetyl-CoA = N(6)-acetyl-L-lysyl-[protein] + CoA + H(+). Functionally, probable transcriptional regulator that acts as a histone acetyltransferase. Mediates the acetylation of histone H3 and H4 of target loci (e.g. FLC). Involved in an auxin-independent regulation of shoot branching and flowering time. This Arabidopsis thaliana (Mouse-ear cress) protein is Methyl-CpG-binding domain-containing protein 9 (MBD9).